The primary structure comprises 300 residues: Small ribosomal subunit protein uS4m (300 aa).

The S4 RNA-binding domain maps to 146–209; it reads KRVDMVLLRS…MKRKLLKRLK (64 aa).

It belongs to the universal ribosomal protein uS4 family.

It localises to the mitochondrion. The chain is Small ribosomal subunit protein uS4m (mrps4) from Dictyostelium discoideum (Social amoeba).